Consider the following 396-residue polypeptide: S-adenosylmethionine synthase 3 (396 aa).

Glu-13 lines the Mg(2+) pocket. Residue His-19 coordinates ATP. Glu-47 provides a ligand contact to K(+). Residues Glu-60 and Gln-103 each contribute to the L-methionine site. ATP is bound by residues 171-173 (DGK), 239-242 (SGRF), Asp-250, 256-257 (RK), Ala-273, Lys-277, and Lys-281. Position 250 (Asp-250) interacts with L-methionine. Lys-281 is an L-methionine binding site.

Belongs to the AdoMet synthase family. In terms of assembly, homotetramer. It depends on Mn(2+) as a cofactor. Mg(2+) is required as a cofactor. Requires Co(2+) as cofactor. The cofactor is K(+). As to expression, expressed in roots, stems and leaves (at protein level).

The protein resides in the cytoplasm. The enzyme catalyses L-methionine + ATP + H2O = S-adenosyl-L-methionine + phosphate + diphosphate. It functions in the pathway amino-acid biosynthesis; S-adenosyl-L-methionine biosynthesis; S-adenosyl-L-methionine from L-methionine: step 1/1. In terms of biological role, catalyzes the formation of S-adenosylmethionine from methionine and ATP. The reaction comprises two steps that are both catalyzed by the same enzyme: formation of S-adenosylmethionine (AdoMet) and triphosphate, and subsequent hydrolysis of the triphosphate. May be involved in the synthesis of betain in response to abiotic stress such as high salinity. The polypeptide is S-adenosylmethionine synthase 3 (SAMS3) (Atriplex nummularia (Old man saltbush)).